The chain runs to 393 residues: Phosphopentomutase (393 aa).

Residues aspartate 13, aspartate 286, histidine 291, aspartate 327, histidine 328, and histidine 339 each coordinate Mn(2+).

This sequence belongs to the phosphopentomutase family. The cofactor is Mn(2+).

The protein resides in the cytoplasm. It carries out the reaction 2-deoxy-alpha-D-ribose 1-phosphate = 2-deoxy-D-ribose 5-phosphate. The catalysed reaction is alpha-D-ribose 1-phosphate = D-ribose 5-phosphate. It functions in the pathway carbohydrate degradation; 2-deoxy-D-ribose 1-phosphate degradation; D-glyceraldehyde 3-phosphate and acetaldehyde from 2-deoxy-alpha-D-ribose 1-phosphate: step 1/2. Isomerase that catalyzes the conversion of deoxy-ribose 1-phosphate (dRib-1-P) and ribose 1-phosphate (Rib-1-P) to deoxy-ribose 5-phosphate (dRib-5-P) and ribose 5-phosphate (Rib-5-P), respectively. This chain is Phosphopentomutase, found in Symbiobacterium thermophilum (strain DSM 24528 / JCM 14929 / IAM 14863 / T).